The sequence spans 552 residues: Chromosomal replication initiator protein DnaA (552 aa).

The tract at residues 1 to 90 (MWNETWNEIT…FTVAVTVDPT (90 aa)) is domain I, interacts with DnaA modulators. Residues 90 to 210 (TLDVIQDLPH…KPAHDPDRNG (121 aa)) are domain II. Residues 113-213 (EHPHYSPVSQ…HDPDRNGSLN (101 aa)) form a disordered region. The segment covering 155-170 (PQPSQSSQSAQQQPAQ) has biased composition (low complexity). A domain III, AAA+ region region spans residues 211-427 (SLNPRYTFDT…GAFIRVSAYA (217 aa)). ATP-binding residues include Gly-255, Gly-257, Lys-258, and Thr-259. Positions 428–552 (SLNEAPINMA…TQQIKSSDRA (125 aa)) are domain IV, binds dsDNA.

The protein belongs to the DnaA family. Oligomerizes as a right-handed, spiral filament on DNA at oriC.

It localises to the cytoplasm. Plays an essential role in the initiation and regulation of chromosomal replication. ATP-DnaA binds to the origin of replication (oriC) to initiate formation of the DNA replication initiation complex once per cell cycle. Binds the DnaA box (a 9 base pair repeat at the origin) and separates the double-stranded (ds)DNA. Forms a right-handed helical filament on oriC DNA; dsDNA binds to the exterior of the filament while single-stranded (ss)DNA is stabiized in the filament's interior. The ATP-DnaA-oriC complex binds and stabilizes one strand of the AT-rich DNA unwinding element (DUE), permitting loading of DNA polymerase. After initiation quickly degrades to an ADP-DnaA complex that is not apt for DNA replication. Binds acidic phospholipids. This is Chromosomal replication initiator protein DnaA from Corynebacterium diphtheriae (strain ATCC 700971 / NCTC 13129 / Biotype gravis).